The primary structure comprises 176 residues: PPE family protein PPE57 (176 aa).

It belongs to the mycobacterial PPE family. In terms of assembly, interacts with human TLR2.

Its subcellular location is the secreted. It localises to the cell wall. It is found in the cell surface. Its function is as follows. Plays a key role in regulating innate and adaptive immune responses through human Toll-like receptor 2 (TLR2). Interacts with TLR2, leading to the subsequent activation of the mitogen-activated protein kinase (MAPK) and nuclear factor kappa B (NF-kappa-B) signaling pathways. Induces macrophage activation by augmenting the expression of several cell surface molecules (CD40, CD80, CD86 and MHC class II) and pro-inflammatory cytokines (TNF-alpha, IL-6 and IL-12p40) within macrophages. Also participates in adaptive immunity by directing Th1-polarised immune responses. Stimulates specific humoral and cellular immune responses in tuberculosis (TB) patients. Induces a strong IgG(1) antibody response and an increased Th1/Th2 type immune response in mice. The chain is PPE family protein PPE57 from Mycobacterium tuberculosis (strain ATCC 25618 / H37Rv).